The following is a 91-amino-acid chain: DNA-directed RNA polymerase subunit omega (91 aa).

This sequence belongs to the RNA polymerase subunit omega family. In terms of assembly, the RNAP catalytic core consists of 2 alpha, 1 beta, 1 beta' and 1 omega subunit. When a sigma factor is associated with the core the holoenzyme is formed, which can initiate transcription.

It carries out the reaction RNA(n) + a ribonucleoside 5'-triphosphate = RNA(n+1) + diphosphate. Promotes RNA polymerase assembly. Latches the N- and C-terminal regions of the beta' subunit thereby facilitating its interaction with the beta and alpha subunits. This chain is DNA-directed RNA polymerase subunit omega, found in Psychromonas ingrahamii (strain DSM 17664 / CCUG 51855 / 37).